Here is a 342-residue protein sequence, read N- to C-terminus: Photosystem II assembly lipoprotein Ycf48 (342 aa).

The first 28 residues, 1–28 (MPVKFPSLKFEQLKQLVLVAAIAVFCVS), serve as a signal peptide directing secretion. The N-palmitoyl cysteine moiety is linked to residue Cys29. Cys29 is lipidated: S-diacylglycerol cysteine. The short motif at 196–220 (RGNFYSTWAPGQTEWTPHNRNSSRR) is the Arg-rich patch element. Residues 340–342 (MVP) constitute a propeptide that is removed on maturation.

The protein belongs to the Ycf48 family. Part of early PSII assembly complexes which includes D1 (psbA) and PsbI; not found in mature PSII. By two-hybrid analysis in yeast interacts with precursor and intermediate forms of D1, but less with mature D1. Binds to the lumenal side of PSI and PSII complexes. Coimmunoprecipitates with YidC. Purified chlorophyll- and carotenoid-containing photosystem II (PSII) assembly intermediate complex RCII* (iD1, D1, D2, PsbE, PsbF, PsbI, Ycf39, Ycf48, HliC and HliD). In terms of processing, the last 3 residues are removed in the mature protein.

The protein resides in the cellular thylakoid membrane. In terms of biological role, a factor required for optimal assembly of photosystem II (PSII) which acts in the early stages of PSII assembly. Also plays a role in replacement of photodamaged D1 (psbA). May interact with precursor D1 to prevent its premature processing before association with D2 (psbD). May also play a role in chlorophyll insertion into chlorophyll-binding proteins. Increasing levels of chlorophyll precursors partially suppresses deletion of this protein, supporting the idea that Ycf48 assists YidC in synthesis of chlorophyll-binding proteins. The Ycf39-Hlip complex binds D1 at an early stage of PSII assembly along with Ycf48, ribosomes and ChlG, the last enzyme in chlorophyll biosynthesis; it may be involved in chlorophyll reuse and delivery to D1 in the initial stages of PSII assembly. This chain is Photosystem II assembly lipoprotein Ycf48, found in Synechocystis sp. (strain ATCC 27184 / PCC 6803 / Kazusa).